A 369-amino-acid polypeptide reads, in one-letter code: Geranylgeranyl pyrophosphate synthase, chloroplastic (369 aa).

Isopentenyl diphosphate contacts are provided by lysine 118, arginine 121, and histidine 150. Aspartate 157 and aspartate 163 together coordinate Mg(2+). Arginine 168 contributes to the dimethylallyl diphosphate binding site. Arginine 169 contacts isopentenyl diphosphate. Dimethylallyl diphosphate contacts are provided by lysine 254, threonine 255, glutamine 292, lysine 309, and lysine 319.

Belongs to the FPP/GGPP synthase family. Monomer. Mg(2+) serves as cofactor.

The protein localises to the plastid. The protein resides in the chloroplast. The catalysed reaction is isopentenyl diphosphate + dimethylallyl diphosphate = (2E)-geranyl diphosphate + diphosphate. It catalyses the reaction isopentenyl diphosphate + (2E)-geranyl diphosphate = (2E,6E)-farnesyl diphosphate + diphosphate. It carries out the reaction isopentenyl diphosphate + (2E,6E)-farnesyl diphosphate = (2E,6E,10E)-geranylgeranyl diphosphate + diphosphate. The protein operates within isoprenoid biosynthesis; farnesyl diphosphate biosynthesis; farnesyl diphosphate from geranyl diphosphate and isopentenyl diphosphate: step 1/1. It functions in the pathway isoprenoid biosynthesis; geranyl diphosphate biosynthesis; geranyl diphosphate from dimethylallyl diphosphate and isopentenyl diphosphate: step 1/1. It participates in isoprenoid biosynthesis; geranylgeranyl diphosphate biosynthesis; geranylgeranyl diphosphate from farnesyl diphosphate and isopentenyl diphosphate: step 1/1. Functionally, catalyzes the trans-addition of the three molecules of IPP onto DMAPP to form geranylgeranyl pyrophosphate. The polypeptide is Geranylgeranyl pyrophosphate synthase, chloroplastic (Capsicum annuum (Capsicum pepper)).